A 568-amino-acid polypeptide reads, in one-letter code: bZIP transcription factor 60 (568 aa).

Low complexity-rich tracts occupy residues 1–13 and 60–78; these read MAEP…FADL and TTSS…TSSA. Disordered stretches follow at residues 1–29 and 45–134; these read MAEP…TLGD and DFDV…RKKQ. Topologically, residues 1–240 are cytoplasmic; the sequence is MAEPDLLAPF…PAKKARKTKK (240 aa). A compositionally biased stretch (basic and acidic residues) spans 103-113; sequence GGKDGKDDEAK. The 61-residue stretch at 111–171 folds into the bZIP domain; it reads EAKRRARLVR…AENAALKQQL (61 aa). The tract at residues 113–144 is basic motif; it reads KRRARLVRNRESAHQSRQRKKQYVEELEGKVK. The leucine-zipper stretch occupies residues 150–157; sequence IADLTARI. A helical membrane pass occupies residues 241 to 261; the sequence is VAGVSLLGLLFLMMVCGCLVP. Topologically, residues 262-568 are lumenal; the sequence is AVNRMYGAAY…LPFKSHSPHL (307 aa). N-linked (GlcNAc...) asparagine glycans are attached at residues Asn-307, Asn-452, Asn-456, Asn-488, and Asn-499. The interval 479–510 is disordered; the sequence is AIPLRGSTSNDTDHFKAPPKNHSQSHAGRKPV.

The protein belongs to the bZIP family.

It localises to the endoplasmic reticulum membrane. It is found in the nucleus. Functionally, transcription factor involved in endoplasmic reticulum (ER) stress response. Acts as a ER stress sensor and activates the transcription factor BZIP50 and the chaperone BIP1. In Oryza sativa subsp. japonica (Rice), this protein is bZIP transcription factor 60.